Consider the following 488-residue polypeptide: Calcium uniporter protein, mitochondrial (488 aa).

Residues Met1–Arg74 constitute a mitochondrion transit peptide. Residues Arg65–Ala117 form a disordered region. At Asp75–Ala339 the chain is on the mitochondrial matrix side. Residues Pro86–Ser112 are compositionally biased toward basic and acidic residues. A helical membrane pass occupies residues Gln340–Thr361. The Mitochondrial intermembrane portion of the chain corresponds to Phe362–Thr370. The short motif at Trp368–Tyr376 is the Selectivity filter element. A helical membrane pass occupies residues Met371–Leu391. Glu372 provides a ligand contact to Ca(2+). Topologically, residues Tyr392–Asp488 are mitochondrial matrix. The tract at residues Ala464–Asp488 is disordered. Basic and acidic residues predominate over residues Ser475–Asp488.

This sequence belongs to the MCU (TC 1.A.77) family. In terms of assembly, homotetramer, assembles in a dimer or dimers configuration with two interfaces.

The protein localises to the mitochondrion inner membrane. It carries out the reaction Ca(2+)(in) = Ca(2+)(out). Inhibited by ruthenium red or its derivative Ru360. Its function is as follows. Highly selective calcium channel localized to the inner mitochondrial membrane, which mediates calcium uptake into the mitochondrial matrix. Mitochondrial calcium homeostasis plays key roles in cellular physiology and regulates ATP production, cytoplasmic calcium signals and activation of cell death pathways. Sufficient to operate as a pore-forming channel without the need of calcium-sensor or auxiliary subunit. The chain is Calcium uniporter protein, mitochondrial from Neosartorya fischeri (strain ATCC 1020 / DSM 3700 / CBS 544.65 / FGSC A1164 / JCM 1740 / NRRL 181 / WB 181) (Aspergillus fischerianus).